A 69-amino-acid chain; its full sequence is Large ribosomal subunit protein bL31 (69 aa).

This sequence belongs to the bacterial ribosomal protein bL31 family. Type A subfamily. Part of the 50S ribosomal subunit.

In terms of biological role, binds the 23S rRNA. This Magnetococcus marinus (strain ATCC BAA-1437 / JCM 17883 / MC-1) protein is Large ribosomal subunit protein bL31.